The sequence spans 142 residues: Regulatory protein RecX (142 aa).

It belongs to the RecX family.

The protein resides in the cytoplasm. Functionally, modulates RecA activity. The chain is Regulatory protein RecX from Thermus thermophilus (strain ATCC BAA-163 / DSM 7039 / HB27).